A 473-amino-acid chain; its full sequence is Ribulose bisphosphate carboxylase large chain (473 aa).

A propeptide spanning residues 1-2 (MS) is cleaved from the precursor. Proline 3 carries the post-translational modification N-acetylproline. Residue lysine 14 is modified to N6,N6,N6-trimethyllysine. Asparagine 123 and threonine 173 together coordinate substrate. Lysine 175 functions as the Proton acceptor in the catalytic mechanism. Lysine 177 is a binding site for substrate. Residues lysine 201, aspartate 203, and glutamate 204 each coordinate Mg(2+). Lysine 201 is subject to N6-carboxylysine. The Proton acceptor role is filled by histidine 294. Substrate is bound by residues arginine 295, histidine 327, and serine 379.

It belongs to the RuBisCO large chain family. Type I subfamily. In terms of assembly, heterohexadecamer of 8 large chains and 8 small chains; disulfide-linked. The disulfide link is formed within the large subunit homodimers. Mg(2+) is required as a cofactor. Post-translationally, the disulfide bond which can form in the large chain dimeric partners within the hexadecamer appears to be associated with oxidative stress and protein turnover.

The protein localises to the plastid. Its subcellular location is the chloroplast. It carries out the reaction 2 (2R)-3-phosphoglycerate + 2 H(+) = D-ribulose 1,5-bisphosphate + CO2 + H2O. The catalysed reaction is D-ribulose 1,5-bisphosphate + O2 = 2-phosphoglycolate + (2R)-3-phosphoglycerate + 2 H(+). Functionally, ruBisCO catalyzes two reactions: the carboxylation of D-ribulose 1,5-bisphosphate, the primary event in carbon dioxide fixation, as well as the oxidative fragmentation of the pentose substrate in the photorespiration process. Both reactions occur simultaneously and in competition at the same active site. In Vigna unguiculata (Cowpea), this protein is Ribulose bisphosphate carboxylase large chain.